A 233-amino-acid chain; its full sequence is Large ribosomal subunit protein uL1 (233 aa).

Belongs to the universal ribosomal protein uL1 family. Part of the 50S ribosomal subunit.

In terms of biological role, binds directly to 23S rRNA. The L1 stalk is quite mobile in the ribosome, and is involved in E site tRNA release. Functionally, protein L1 is also a translational repressor protein, it controls the translation of the L11 operon by binding to its mRNA. This Campylobacter jejuni subsp. doylei (strain ATCC BAA-1458 / RM4099 / 269.97) protein is Large ribosomal subunit protein uL1.